The primary structure comprises 99 residues: Accessory protein p12I (99 aa).

The helical transmembrane segment at 3-23 (FRLLSPLSPLALTALLLFLLP) threads the bilayer. 2 short sequence motifs (SH3-binding) span residues 4-11 (RLLSPLSP) and 33-38 (RPPPAP). Residues 48-68 (ILSGLLFLLFLPLFFSLPLLL) form a helical membrane-spanning segment. 2 consecutive short sequence motifs (SH3-binding) follow at residues 70 to 77 (PSLPITMR) and 88 to 93 (KAPSQP). Residue lysine 88 forms a Glycyl lysine isopeptide (Lys-Gly) (interchain with G-Cter in ubiquitin); in isolate LAF linkage.

Belongs to the HTLV-1 accessory protein p12I family. As to quaternary structure, p12I is a homodimer. Interacts with human CANX, CALR, ATP6V0C, IL2RB, IL2RG. Binds to MHC-I heavy chains HLA-A2, HLA-B7 and HLA-Cw4. Post-translationally, ubiquitinated; a fraction of P12I is degraded via the ubiquitin system.

It localises to the host endoplasmic reticulum membrane. The protein resides in the host Golgi apparatus. The protein localises to the host cis-Golgi network membrane. In terms of biological role, p12I is a modulator of T-lymphocyte proliferation and immune function and may contribute to establish a persistent infection. Binds and down-modulates cell surface expression of interleukin-2 receptors IL2RB and IL2RG. Also down-modulates cell surface MHC-I molecules by binding to free immature MHC-I heavy chains in the ER and targeting them to the proteasome for degradation. Binding to IL2RB mediates recruitment of JAK1 and JAK3. As a result of this interaction, p12I increases DNA-binding and transcriptional activity of STAT5. In Homo sapiens (Human), this protein is Accessory protein p12I.